Here is a 186-residue protein sequence, read N- to C-terminus: uncharacterized protein (186 aa).

A signal peptide spans 1–28; that stretch reads MSVKPAALFRISAALAVAGLGASLIASA.

This is an uncharacterized protein from Rhizobium meliloti (strain 1021) (Ensifer meliloti).